A 274-amino-acid chain; its full sequence is Proteasome subunit beta (274 aa).

Residues M1–G52 constitute a propeptide, removed in mature form; by autocatalysis. Catalysis depends on T53, which acts as the Nucleophile.

This sequence belongs to the peptidase T1B family. In terms of assembly, the 20S proteasome core is composed of 14 alpha and 14 beta subunits that assemble into four stacked heptameric rings, resulting in a barrel-shaped structure. The two inner rings, each composed of seven catalytic beta subunits, are sandwiched by two outer rings, each composed of seven alpha subunits. The catalytic chamber with the active sites is on the inside of the barrel. Has a gated structure, the ends of the cylinder being occluded by the N-termini of the alpha-subunits. Is capped by the proteasome-associated ATPase, ARC.

Its subcellular location is the cytoplasm. It carries out the reaction Cleavage of peptide bonds with very broad specificity.. It participates in protein degradation; proteasomal Pup-dependent pathway. The formation of the proteasomal ATPase ARC-20S proteasome complex, likely via the docking of the C-termini of ARC into the intersubunit pockets in the alpha-rings, may trigger opening of the gate for substrate entry. Interconversion between the open-gate and close-gate conformations leads to a dynamic regulation of the 20S proteasome proteolysis activity. Functionally, component of the proteasome core, a large protease complex with broad specificity involved in protein degradation. The polypeptide is Proteasome subunit beta (Parafrankia sp. (strain EAN1pec)).